We begin with the raw amino-acid sequence, 623 residues long: UvrABC system protein C (623 aa).

The 80-residue stretch at 12-91 (PSPGVYLMKS…IKQHRPKYNI (80 aa)) folds into the GIY-YIG domain. Residues 201–236 (TEVARLYRSKMNLAAEQMRYEDAARYRDLLRAIEVT) enclose the UVR domain. The interval 603 to 623 (RLHGSPLPNPPPPGEGAMDRK) is disordered.

The protein belongs to the UvrC family. In terms of assembly, interacts with UvrB in an incision complex.

The protein resides in the cytoplasm. In terms of biological role, the UvrABC repair system catalyzes the recognition and processing of DNA lesions. UvrC both incises the 5' and 3' sides of the lesion. The N-terminal half is responsible for the 3' incision and the C-terminal half is responsible for the 5' incision. The protein is UvrABC system protein C of Citrifermentans bemidjiense (strain ATCC BAA-1014 / DSM 16622 / JCM 12645 / Bem) (Geobacter bemidjiensis).